The sequence spans 363 residues: Phosphoserine aminotransferase (363 aa).

Arg42 provides a ligand contact to L-glutamate. Residues 76 to 77 (AS), Trp101, Thr151, Asp170, and Gln193 each bind pyridoxal 5'-phosphate. An N6-(pyridoxal phosphate)lysine modification is found at Lys194. 234–235 (NT) lines the pyridoxal 5'-phosphate pocket.

Belongs to the class-V pyridoxal-phosphate-dependent aminotransferase family. SerC subfamily. As to quaternary structure, homodimer. Requires pyridoxal 5'-phosphate as cofactor.

The protein resides in the cytoplasm. The enzyme catalyses O-phospho-L-serine + 2-oxoglutarate = 3-phosphooxypyruvate + L-glutamate. It catalyses the reaction 4-(phosphooxy)-L-threonine + 2-oxoglutarate = (R)-3-hydroxy-2-oxo-4-phosphooxybutanoate + L-glutamate. It participates in amino-acid biosynthesis; L-serine biosynthesis; L-serine from 3-phospho-D-glycerate: step 2/3. Catalyzes the reversible conversion of 3-phosphohydroxypyruvate to phosphoserine and of 3-hydroxy-2-oxo-4-phosphonooxybutanoate to phosphohydroxythreonine. This Listeria monocytogenes serovar 1/2a (strain ATCC BAA-679 / EGD-e) protein is Phosphoserine aminotransferase.